The primary structure comprises 265 residues: Glutamate racemase (265 aa).

Substrate-binding positions include 13–14 (DS) and 45–46 (YG). The Proton donor/acceptor role is filled by Cys-77. 78 to 79 (NT) provides a ligand contact to substrate. Cys-185 functions as the Proton donor/acceptor in the catalytic mechanism. 186–187 (TH) is a substrate binding site.

It belongs to the aspartate/glutamate racemases family.

It carries out the reaction L-glutamate = D-glutamate. It functions in the pathway cell wall biogenesis; peptidoglycan biosynthesis. Provides the (R)-glutamate required for cell wall biosynthesis. This Vibrio cholerae serotype O1 (strain ATCC 39315 / El Tor Inaba N16961) protein is Glutamate racemase.